Here is a 205-residue protein sequence, read N- to C-terminus: Guanylate kinase (205 aa).

The region spanning 7 to 185 (GNIFIISAAS…AEEDLRHIVN (179 aa)) is the Guanylate kinase-like domain. 14-21 (AASGTGKT) provides a ligand contact to ATP.

Belongs to the guanylate kinase family.

It is found in the cytoplasm. The catalysed reaction is GMP + ATP = GDP + ADP. Its function is as follows. Essential for recycling GMP and indirectly, cGMP. This is Guanylate kinase (gmk) from Neisseria meningitidis serogroup B (strain ATCC BAA-335 / MC58).